We begin with the raw amino-acid sequence, 622 residues long: Low affinity potassium transport system protein Kup (622 aa).

12 consecutive transmembrane segments (helical) span residues 9–29 (LPAV…TSPL), 49–69 (VFGF…LKYL), 101–121 (VLVI…VITP), 137–157 (PSMD…LFII), 165–185 (VGKL…VLGA), 212–232 (AVSF…EALY), 247–267 (WFTV…ALLL), 279–299 (LLAP…ATII), 337–357 (IYIP…IVSF), 363–383 (LAAA…ILFC), 397–417 (AWVL…ANVV), and 419–439 (ILSG…IMTT).

It belongs to the HAK/KUP transporter (TC 2.A.72) family.

It is found in the cell inner membrane. The enzyme catalyses K(+)(in) + H(+)(in) = K(+)(out) + H(+)(out). Functionally, responsible for the low-affinity transport of potassium into the cell. Likely operates as a K(+):H(+) symporter. This is Low affinity potassium transport system protein Kup from Pectobacterium carotovorum subsp. carotovorum (strain PC1).